Consider the following 351-residue polypeptide: Dihydroorotate dehydrogenase (quinone) (351 aa).

FMN contacts are provided by residues 61-65 (AGLDK) and Thr-85. Residue Lys-65 participates in substrate binding. 110-114 (NRMGF) lines the substrate pocket. FMN contacts are provided by Asn-139 and Asn-172. A substrate-binding site is contributed by Asn-172. The active-site Nucleophile is the Ser-175. Residue Asn-177 participates in substrate binding. The FMN site is built by Lys-217 and Thr-245. 246 to 247 (NT) provides a ligand contact to substrate. FMN contacts are provided by residues Gly-268, Gly-297, and 318–319 (YT).

Belongs to the dihydroorotate dehydrogenase family. Type 2 subfamily. As to quaternary structure, monomer. The cofactor is FMN.

Its subcellular location is the cell membrane. The catalysed reaction is (S)-dihydroorotate + a quinone = orotate + a quinol. Its pathway is pyrimidine metabolism; UMP biosynthesis via de novo pathway; orotate from (S)-dihydroorotate (quinone route): step 1/1. Functionally, catalyzes the conversion of dihydroorotate to orotate with quinone as electron acceptor. In Xylella fastidiosa (strain M12), this protein is Dihydroorotate dehydrogenase (quinone).